We begin with the raw amino-acid sequence, 93 residues long: Cell division protein FtsB (93 aa).

Residues 1–3 (MRL) lie on the Cytoplasmic side of the membrane. The helical transmembrane segment at 4 to 21 (FILSLFALLVMFQYDFWF) threads the bilayer. Residues 22–93 (GKNGYLDYQD…FYRIVKNKNR (72 aa)) lie on the Periplasmic side of the membrane. Residues 28–76 (DYQDIKAEIIQRKQENKKLSQRNQTIFAEIQDLKNGIEAIEERARMEHE) adopt a coiled-coil conformation.

Belongs to the FtsB family. In terms of assembly, part of a complex composed of FtsB, FtsL and FtsQ.

It localises to the cell inner membrane. Its function is as follows. Essential cell division protein. May link together the upstream cell division proteins, which are predominantly cytoplasmic, with the downstream cell division proteins, which are predominantly periplasmic. This Histophilus somni (strain 129Pt) (Haemophilus somnus) protein is Cell division protein FtsB.